A 71-amino-acid polypeptide reads, in one-letter code: Large ribosomal subunit protein bL31 (71 aa).

Zn(2+) is bound by residues cysteine 16, cysteine 18, cysteine 36, and cysteine 39.

The protein belongs to the bacterial ribosomal protein bL31 family. Type A subfamily. In terms of assembly, part of the 50S ribosomal subunit. It depends on Zn(2+) as a cofactor.

In terms of biological role, binds the 23S rRNA. This chain is Large ribosomal subunit protein bL31, found in Thermus thermophilus (strain ATCC BAA-163 / DSM 7039 / HB27).